We begin with the raw amino-acid sequence, 798 residues long: Integrin beta-1 (798 aa).

An N-terminal signal peptide occupies residues 1–20; the sequence is MNLQLIFWIGLISSVCCVFG. Topologically, residues 21-728 are extracellular; the sequence is QADEDRCLKA…ETPECPTGPD (708 aa). Positions 26–76 constitute a PSI domain; the sequence is RCLKANAKSCGECIQAGPNCGWCTNSTFLQEGMPTSARCDDLEALKKKGCH. 28 disulfide bridges follow: C27–C45, C35–C464, C38–C64, C48–C75, C207–C213, C261–C301, C401–C415, C435–C462, C466–C486, C477–C489, C491–C500, C502–C533, C516–C531, C525–C536, C538–C553, C555–C576, C560–C574, C568–C579, C581–C590, C592–C615, C599–C613, C607–C618, C620–C630, C633–C636, C640–C691, C646–C665, C649–C661, and C699–C723. Positions 75–91 are enriched in basic and acidic residues; the sequence is CHPNDTENPRGSKDIKK. The tract at residues 75–105 is disordered; that stretch reads CHPNDTENPRGSKDIKKNKNVTNRSKGTAEK. N-linked (GlcNAc...) asparagine glycans are attached at residues N94 and N97. Residues 140 to 378 enclose the VWFA domain; sequence DYPIDLYYLM…QLIIDAYNSL (239 aa). Mg(2+) is bound by residues S152 and S154. S154, D157, D158, and E189 together coordinate Ca(2+). The tract at residues 207-213 is CX3CL1-binding; it reads CTNEQNC. A glycan (N-linked (GlcNAc...) asparagine) is linked at N212. Positions 244, 246, 248, and 249 each coordinate Ca(2+). E249 contributes to the Mg(2+) binding site. N-linked (GlcNAc...) asparagine glycosylation is present at N269. The CX3CL1-binding stretch occupies residues 295–314; the sequence is LPNDGQCHLKNDVYTMSHYY. A Ca(2+)-binding site is contributed by A362. Positions 383–465 are interaction with TMEM182; that stretch reads ILENSKLPEG…IILQFICECE (83 aa). N-linked (GlcNAc...) asparagine glycosylation is found at N406 and N417. I-EGF domains lie at 466–501, 502–554, 555–591, and 592–631; these read CQGE…RHCE, CSTD…KFCE, CDNF…SACD, and CSLD…PTCE. Residue N481 is glycosylated (N-linked (GlcNAc...) asparagine). N520 carries N-linked (GlcNAc...) asparagine glycosylation. An N-linked (GlcNAc...) asparagine glycan is attached at N584. An N-linked (GlcNAc...) asparagine glycan is attached at N669. A helical transmembrane segment spans residues 729–749; that stretch reads IIPIVAGVVAGIVLIGLALLL. The Cytoplasmic portion of the chain corresponds to 750–798; that stretch reads IWKLLMIIHDRREFAKFEKERMNAKWDTGENPIYKSAVTTVVNPKYEGK. The tract at residues 762–767 is signal for sorting from recycling endosomes; interaction with ACAP1; the sequence is EFAKFE. Phosphothreonine is present on T777. Y783 is modified (phosphotyrosine). The residue at position 785 (S785) is a Phosphoserine. Residues 785-792 are interaction with ITGB1BP1; the sequence is SAVTTVVN. T789 is modified (phosphothreonine). K794 carries the post-translational modification N6-acetyllysine; alternate. Residue K794 forms a Glycyl lysine isopeptide (Lys-Gly) (interchain with G-Cter in SUMO1); alternate linkage.

This sequence belongs to the integrin beta chain family. As to quaternary structure, interacts with seprase FAP (seprase); the interaction occurs at the cell surface of invadopodia membrane in a collagen-dependent manner. Heterodimer of an alpha and a beta subunit. Beta-1 associates with either alpha-1, alpha-2, alpha-3, alpha-4, alpha-5, alpha-6, alpha-7, alpha-8, alpha-9, alpha-10, alpha-11 or alpha-V. ITGA6:ITGB1 is found in a complex with CD9; interaction takes place in oocytes and is involved in sperm-egg fusion. Binds LGALS3BP and NMRK2, when associated with alpha-7, but not with alpha-5. Interacts with FLNA, FLNB, FLNC and RANBP9. Interacts with KRT1 in the presence of RACK1 and SRC. Interacts with JAML; integrin alpha-4/beta-1 may regulate leukocyte to endothelial cells adhesion by controlling JAML homodimerization. Interacts with RAB21. Interacts (via the cytoplasmic region) with RAB25 (via the hypervariable C-terminal region). Interacts with MYO10. Interacts with ITGB1BP1 (via C-terminal region); the interaction is a prerequisite for focal adhesion disassembly. Interacts with TLN1; the interaction is prevented by competitive binding of ITGB1BP1. Interacts with ACAP1; required for ITGB1 recycling. Interacts with ASAP3. Interacts with FERMT2; the interaction is inhibited in presence of ITGB1BP1. Interacts with DAB2. Interacts with FGR and HCK. Interacts with alpha-7A and alpha-7B in adult skeletal muscle. Interacts with alpha-7B in cardiomyocytes of adult heart. Interacts with EMP2; the interaction may be direct or indirect and ITGB1 has a heterodimer form. ITGA5:ITGB1 interacts with CCN3. ITGA4:ITGB1 is found in a ternary complex with CX3CR1 and CX3CL1. ITGA5:ITGB1 interacts with FBN1. ITGA5:ITGB1 acts as a receptor for fibronectin FN1 and mediates R-G-D-dependent cell adhesion to FN1. ITGA5:ITGB1 interacts with IL1B. Interacts with MDK. ITGA4:ITGB1 interacts with MDK; this interaction mediates MDK-induced osteoblast cells migration through PXN phosphorylation. ITGA6:ITGB1 interacts with MDK; this interaction mediates MDK-induced neurite-outgrowth. ITGA5:ITGB1 interacts with ACE2. Interacts with TMEM182 and LAMB1. Interacts with tensin TNS3; TNS3 also interacts with PEAK1, thus acting as an adapter molecule to bridge the association of PEAK1 with ITGB1. Interacts with tensin TNS4; the interaction displaces tensin TNS3 from the ITGB1 cytoplasmic tail and promotes ITGB1 stability. Integrin ITGA9:ITGB1 interacts with SPP1/OPN (via N-terminus). Integrin ITGA9:ITGB1 interacts with TNC/TNFN3 (via the 3rd Fibronectin type-III domain). Integrins ITGA4:ITGB1 and ITGA9:ITGB1 interact with SVEP1 (via Sushi domain 21); thereby inhibit Ca(2+) intracellular signaling and as a result repress vasocontraction. ITGA4:ITGB1 and ITGA5:ITGB1 interacts with SELP. Interacts with CD248. ITGA5:ITGB1 interacts with IGFBP1. ITGA4:ITGB1 interacts with BCAM. Interacts with ADGRG6.

The protein localises to the cell membrane. The protein resides in the cell projection. It is found in the invadopodium membrane. It localises to the ruffle membrane. Its subcellular location is the recycling endosome. The protein localises to the melanosome. The protein resides in the cell junction. It is found in the focal adhesion. It localises to the lamellipodium. Its subcellular location is the ruffle. Functionally, integrins alpha-1/beta-1, alpha-2/beta-1, alpha-10/beta-1 and alpha-11/beta-1 are receptors for collagen. Integrins alpha-1/beta-1 and alpha-2/beta-2 recognize the proline-hydroxylated sequence G-F-P-G-E-R in collagen. Integrins alpha-2/beta-1, alpha-3/beta-1, alpha-4/beta-1, alpha-5/beta-1, alpha-8/beta-1, alpha-10/beta-1, alpha-11/beta-1 and alpha-V/beta-1 are receptors for fibronectin. Alpha-4/beta-1 recognizes one or more domains within the alternatively spliced CS-1 and CS-5 regions of fibronectin. Integrin alpha-5/beta-1 is a receptor for fibrinogen. Integrin alpha-1/beta-1, alpha-2/beta-1, alpha-6/beta-1 and alpha-7/beta-1 are receptors for lamimin. Integrin alpha-6/beta-1 (ITGA6:ITGB1) is present in oocytes and is involved in sperm-egg fusion. Integrin alpha-4/beta-1 is a receptor for VCAM1 and recognizes the sequence Q-I-D-S in VCAM1. Integrin alpha-9/beta-1 is a receptor for VCAM1, cytotactin and osteopontin. It recognizes the sequence A-E-I-D-G-I-E-L in cytotactin. Integrin alpha-3/beta-1 is a receptor for epiligrin, thrombospondin and CSPG4. Integrin alpha-3/beta-1 provides a docking site for FAP (seprase) at invadopodia plasma membranes in a collagen-dependent manner and hence may participate in the adhesion, formation of invadopodia and matrix degradation processes, promoting cell invasion. Alpha-3/beta-1 may mediate with LGALS3 the stimulation by CSPG4 of endothelial cells migration. Integrin alpha-V/beta-1 is a receptor for vitronectin. Beta-1 integrins recognize the sequence R-G-D in a wide array of ligands. When associated with alpha-7/beta-1 integrin, regulates cell adhesion and laminin matrix deposition. Involved in promoting endothelial cell motility and angiogenesis. Involved in osteoblast compaction through the fibronectin fibrillogenesis cell-mediated matrix assembly process and the formation of mineralized bone nodules. May be involved in up-regulation of the activity of kinases such as PKC via binding to KRT1. Together with KRT1 and RACK1, serves as a platform for SRC activation or inactivation. Plays a mechanistic adhesive role during telophase, required for the successful completion of cytokinesis. ITGA4:ITGB1 binds to fractalkine (CX3CL1) and may act as its coreceptor in CX3CR1-dependent fractalkine signaling. ITGA4:ITGB1 and ITGA5:ITGB1 bind to PLA2G2A via a site (site 2) which is distinct from the classical ligand-binding site (site 1) and this induces integrin conformational changes and enhanced ligand binding to site 1. ITGA5:ITGB1 acts as a receptor for fibrillin-1 (FBN1) and mediates R-G-D-dependent cell adhesion to FBN1. ITGA5:ITGB1 is a receptor for IL1B and binding is essential for IL1B signaling. ITGA5:ITGB3 is a receptor for soluble CD40LG and is required for CD40/CD40LG signaling. Plays an important role in myoblast differentiation and fusion during skeletal myogenesis. ITGA9:ITGB1 may play a crucial role in SVEP1/polydom-mediated myoblast cell adhesion. Integrins ITGA9:ITGB1 and ITGA4:ITGB1 repress PRKCA-mediated L-type voltage-gated channel Ca(2+) influx and ROCK-mediated calcium sensitivity in vascular smooth muscle cells via their interaction with SVEP1, thereby inhibit vasocontraction. In Camelus bactrianus (Bactrian camel), this protein is Integrin beta-1.